A 415-amino-acid chain; its full sequence is Serine hydroxymethyltransferase 1 (415 aa).

Residues L117 and 121–123 (GHL) each bind (6S)-5,6,7,8-tetrahydrofolate. K225 carries the post-translational modification N6-(pyridoxal phosphate)lysine. Residue 349–351 (SPF) participates in (6S)-5,6,7,8-tetrahydrofolate binding.

This sequence belongs to the SHMT family. As to quaternary structure, homodimer. It depends on pyridoxal 5'-phosphate as a cofactor.

It localises to the cytoplasm. The catalysed reaction is (6R)-5,10-methylene-5,6,7,8-tetrahydrofolate + glycine + H2O = (6S)-5,6,7,8-tetrahydrofolate + L-serine. It functions in the pathway one-carbon metabolism; tetrahydrofolate interconversion. The protein operates within amino-acid biosynthesis; glycine biosynthesis; glycine from L-serine: step 1/1. Functionally, catalyzes the reversible interconversion of serine and glycine with tetrahydrofolate (THF) serving as the one-carbon carrier. This reaction serves as the major source of one-carbon groups required for the biosynthesis of purines, thymidylate, methionine, and other important biomolecules. Also exhibits THF-independent aldolase activity toward beta-hydroxyamino acids, producing glycine and aldehydes, via a retro-aldol mechanism. In Sulfurimonas denitrificans (strain ATCC 33889 / DSM 1251) (Thiomicrospira denitrificans (strain ATCC 33889 / DSM 1251)), this protein is Serine hydroxymethyltransferase 1.